The sequence spans 635 residues: Thrombopoietin receptor (635 aa).

A signal peptide spans 1–25 (MPSWALFMVTSCLLLAPQNLAQVSS). Topologically, residues 26 to 491 (QDVSLLASDS…RVETATETAW (466 aa)) are extracellular. Cystine bridges form between C40–C50 and C77–C93. Residues N117 and N178 are each glycosylated (N-linked (GlcNAc...) asparagine). A Fibronectin type-III 1 domain is found at 172-281 (GPRDPKNSTG…WSLPVTVDLP (110 aa)). Disulfide bonds link C193/C323, C194/C241, C291/C301, and C334/C352. Positions 205-232 (ALDQSPCAQPTMPWQDGPKQTSPSREAS) are disordered. N298 is a glycosylation site (N-linked (GlcNAc...) asparagine). An N-linked (GlcNAc...) asparagine glycan is attached at N358. The Fibronectin type-III 2 domain maps to 392–486 (PTPNLHWREI…WSDPTRVETA (95 aa)). A WSXWS motif motif is present at residues 474–478 (WSSWS). Residues 492–513 (ISLVTALHLVLGLSAVLGLLLL) traverse the membrane as a helical segment. The Cytoplasmic segment spans residues 514 to 635 (RWQFPAHYRR…YLPLSYWQQP (122 aa)). A Box 1 motif motif is present at residues 528 to 536 (LWPSLPDLH). Residues K553 and K573 each participate in a glycyl lysine isopeptide (Lys-Gly) (interchain with G-Cter in ubiquitin) cross-link. Phosphotyrosine is present on residues Y591, Y626, and Y631.

Belongs to the type I cytokine receptor family. Type 1 subfamily. As to quaternary structure, homodimer. Interacts with ATXN2L. Interacts with JAK2 and TYK2; these interactions increase MPL localization to the cell membrane. Interacts with THPO. Interacts with SHIP/INPP5D. Interacts with BTK. Interacts with SYK; this interaction negatively regulates THPO-mediated ERK1/2 signaling. Phosphorylated at Tyr-591 in response to THPO stimulation. In terms of processing, ubiquitination at Lys-553 and Lys-573 targets MPL for degradation by both the lysosomal and proteasomal pathways. The E3 ubiquitin-protein ligase CBL significantly contributes to this ubiquitination. As to expression, expressed at a low level in a large number of cells of hematopoietic origin. Isoform 1 and isoform 2 are always found to be coexpressed.

The protein localises to the cell membrane. The protein resides in the golgi apparatus. It localises to the cell surface. Its function is as follows. Receptor for thrombopoietin that regulates hematopoietic stem cell renewal, megakaryocyte differentiation, and platelet formation. Upon activation by THPO, induces rapid tyrosine phosphorylation and activation of JAK2, providing docking sites for many signaling proteins such as STAT5, SHIP/INPP5D, GRB2, SOS1 and PI3K. In turn, These signaling cascades lead to the proliferation, survival, and differentiation of megakaryocytes, ultimately leading to increased platelet production. The protein is Thrombopoietin receptor (MPL) of Homo sapiens (Human).